We begin with the raw amino-acid sequence, 179 residues long: Large ribosomal subunit protein uL5 (179 aa).

Belongs to the universal ribosomal protein uL5 family. Part of the 50S ribosomal subunit; part of the 5S rRNA/L5/L18/L25 subcomplex. Contacts the 5S rRNA and the P site tRNA. Forms a bridge to the 30S subunit in the 70S ribosome.

Its function is as follows. This is one of the proteins that bind and probably mediate the attachment of the 5S RNA into the large ribosomal subunit, where it forms part of the central protuberance. In the 70S ribosome it contacts protein S13 of the 30S subunit (bridge B1b), connecting the 2 subunits; this bridge is implicated in subunit movement. Contacts the P site tRNA; the 5S rRNA and some of its associated proteins might help stabilize positioning of ribosome-bound tRNAs. The sequence is that of Large ribosomal subunit protein uL5 from Haemophilus influenzae (strain 86-028NP).